The chain runs to 108 residues: UPF0060 membrane protein sll0793 (108 aa).

The next 4 membrane-spanning stretches (helical) occupy residues 7 to 27 (LYFV…WLWI), 32 to 52 (SVWL…VATL), 64 to 84 (YGGI…NVVV), and 86 to 106 (RLDW…MYAN).

The protein belongs to the UPF0060 family.

Its subcellular location is the cell inner membrane. This chain is UPF0060 membrane protein sll0793, found in Synechocystis sp. (strain ATCC 27184 / PCC 6803 / Kazusa).